A 685-amino-acid chain; its full sequence is Acetate--CoA ligase [ADP-forming] I (685 aa).

One can recognise an ATP-grasp domain in the interval leucine 477–lysine 513. Alanine 503–valine 514 is a binding site for ATP.

The protein in the N-terminal section; belongs to the acetate CoA ligase alpha subunit family. In the C-terminal section; belongs to the acetate CoA ligase beta subunit family. In terms of assembly, homodimer.

The catalysed reaction is acetate + ATP + CoA = acetyl-CoA + ADP + phosphate. Its activity is regulated as follows. Activity requires divalent metal cations. Functionally, catalyzes the reversible formation of acetate and ATP from acetyl-CoA by using ADP and phosphate. Can use other substrates such as propionyl-CoA and butyryl-CoA, but not phenylacetyl-CoA. Seems to be involved primarily in the conversion of acetyl-CoA to acetate. Participates in the degradation of branched-chain amino acids via branched-chain-acyl-CoA esters. In Archaeoglobus fulgidus (strain ATCC 49558 / DSM 4304 / JCM 9628 / NBRC 100126 / VC-16), this protein is Acetate--CoA ligase [ADP-forming] I.